The primary structure comprises 141 residues: Nucleoside triphosphatase NudI (141 aa).

Residues 1 to 141 (MRQRTIVCPL…RKTLRLKGLL (141 aa)) enclose the Nudix hydrolase domain. The Nudix box motif lies at 38–59 (GGVEPGERIEEALRREIREELG).

This sequence belongs to the Nudix hydrolase family. NudI subfamily. Monomer. Mg(2+) serves as cofactor.

The enzyme catalyses a ribonucleoside 5'-triphosphate + H2O = a ribonucleoside 5'-phosphate + diphosphate + H(+). It catalyses the reaction a 2'-deoxyribonucleoside 5'-triphosphate + H2O = a 2'-deoxyribonucleoside 5'-phosphate + diphosphate + H(+). The catalysed reaction is dUTP + H2O = dUMP + diphosphate + H(+). It carries out the reaction dTTP + H2O = dTMP + diphosphate + H(+). The enzyme catalyses dCTP + H2O = dCMP + diphosphate + H(+). In terms of biological role, catalyzes the hydrolysis of nucleoside triphosphates, with a preference for pyrimidine deoxynucleoside triphosphates (dUTP, dTTP and dCTP). The protein is Nucleoside triphosphatase NudI of Escherichia coli O9:H4 (strain HS).